The chain runs to 316 residues: ATP synthase gamma chain (316 aa).

This sequence belongs to the ATPase gamma chain family. F-type ATPases have 2 components, CF(1) - the catalytic core - and CF(0) - the membrane proton channel. CF(1) has five subunits: alpha(3), beta(3), gamma(1), delta(1), epsilon(1). CF(0) has three main subunits: a, b and c.

The protein resides in the cellular thylakoid membrane. Functionally, produces ATP from ADP in the presence of a proton gradient across the membrane. The gamma chain is believed to be important in regulating ATPase activity and the flow of protons through the CF(0) complex. In Synechococcus sp. (strain ATCC 27144 / PCC 6301 / SAUG 1402/1) (Anacystis nidulans), this protein is ATP synthase gamma chain.